Consider the following 259-residue polypeptide: Deoxyribose-phosphate aldolase (259 aa).

Asp-102 serves as the catalytic Proton donor/acceptor. Lys-167 (schiff-base intermediate with acetaldehyde) is an active-site residue. The Proton donor/acceptor role is filled by Lys-201.

The protein belongs to the DeoC/FbaB aldolase family. DeoC type 2 subfamily.

Its subcellular location is the cytoplasm. It catalyses the reaction 2-deoxy-D-ribose 5-phosphate = D-glyceraldehyde 3-phosphate + acetaldehyde. It participates in carbohydrate degradation; 2-deoxy-D-ribose 1-phosphate degradation; D-glyceraldehyde 3-phosphate and acetaldehyde from 2-deoxy-alpha-D-ribose 1-phosphate: step 2/2. In terms of biological role, catalyzes a reversible aldol reaction between acetaldehyde and D-glyceraldehyde 3-phosphate to generate 2-deoxy-D-ribose 5-phosphate. The protein is Deoxyribose-phosphate aldolase of Salmonella dublin (strain CT_02021853).